The chain runs to 235 residues: MKSLFLSEKIYVLILAGGTGTRMGSEIPKQFLEFSNEPILIHTLKKFQSWKKQKQIVLVSHPEFISETESICSPFLENQDCIIEGGETRHGSMLRGLSALTIQSEDILLIHDAARPFVLLKELDLLCENIRENGISTLASRTSETVLEESNGKTSSFLDREHIWFMKTPQGIRGDILKELLTLPMDPIPTDLCSWALTAGKKSSIVESHPFNLKITRKEDLELAEFYSDLFEKLR.

Belongs to the IspD/TarI cytidylyltransferase family. IspD subfamily.

It catalyses the reaction 2-C-methyl-D-erythritol 4-phosphate + CTP + H(+) = 4-CDP-2-C-methyl-D-erythritol + diphosphate. The protein operates within isoprenoid biosynthesis; isopentenyl diphosphate biosynthesis via DXP pathway; isopentenyl diphosphate from 1-deoxy-D-xylulose 5-phosphate: step 2/6. Functionally, catalyzes the formation of 4-diphosphocytidyl-2-C-methyl-D-erythritol from CTP and 2-C-methyl-D-erythritol 4-phosphate (MEP). The chain is 2-C-methyl-D-erythritol 4-phosphate cytidylyltransferase from Leptospira borgpetersenii serovar Hardjo-bovis (strain L550).